We begin with the raw amino-acid sequence, 371 residues long: Anhydro-N-acetylmuramic acid kinase (371 aa).

Residue 9-16 (GTSLDAVD) coordinates ATP.

It belongs to the anhydro-N-acetylmuramic acid kinase family.

The enzyme catalyses 1,6-anhydro-N-acetyl-beta-muramate + ATP + H2O = N-acetyl-D-muramate 6-phosphate + ADP + H(+). It functions in the pathway amino-sugar metabolism; 1,6-anhydro-N-acetylmuramate degradation. Its pathway is cell wall biogenesis; peptidoglycan recycling. In terms of biological role, catalyzes the specific phosphorylation of 1,6-anhydro-N-acetylmuramic acid (anhMurNAc) with the simultaneous cleavage of the 1,6-anhydro ring, generating MurNAc-6-P. Is required for the utilization of anhMurNAc either imported from the medium or derived from its own cell wall murein, and thus plays a role in cell wall recycling. In Caulobacter vibrioides (strain ATCC 19089 / CIP 103742 / CB 15) (Caulobacter crescentus), this protein is Anhydro-N-acetylmuramic acid kinase.